The chain runs to 747 residues: Catalase-peroxidase 1 (747 aa).

Over residues 1 to 22 (MTDTSDARPPHSDDKTRSHSES) the composition is skewed to basic and acidic residues. The interval 1 to 39 (MTDTSDARPPHSDDKTRSHSESENPAIDSPEPKVHAPLT) is disordered. The segment at residues 112–240 (WHAAGTYRIF…FGATTMGLIY (129 aa)) is a cross-link (tryptophyl-tyrosyl-methioninium (Trp-Tyr) (with M-266)). H113 (proton acceptor) is an active-site residue. Residues 240–266 (YVNPEGPEGKPDPLAAAHDIRETFGRM) constitute a cross-link (tryptophyl-tyrosyl-methioninium (Tyr-Met) (with W-112)). H281 lines the heme b pocket.

Belongs to the peroxidase family. Peroxidase/catalase subfamily. Homodimer or homotetramer. The cofactor is heme b. Post-translationally, formation of the three residue Trp-Tyr-Met cross-link is important for the catalase, but not the peroxidase activity of the enzyme.

It catalyses the reaction H2O2 + AH2 = A + 2 H2O. The enzyme catalyses 2 H2O2 = O2 + 2 H2O. Bifunctional enzyme with both catalase and broad-spectrum peroxidase activity. The protein is Catalase-peroxidase 1 of Mycolicibacterium vanbaalenii (strain DSM 7251 / JCM 13017 / BCRC 16820 / KCTC 9966 / NRRL B-24157 / PYR-1) (Mycobacterium vanbaalenii).